A 425-amino-acid chain; its full sequence is Polyribonucleotide 5'-hydroxyl-kinase Clp1 (425 aa).

ATP-binding positions include Glu-22, Lys-62, and 124-129 (DVGKST).

The protein belongs to the Clp1 family. Clp1 subfamily. Component of the tRNA splicing endonuclease complex. Component of pre-mRNA cleavage complex II (CF-II).

The protein localises to the nucleus. The catalysed reaction is a 5'-end dephospho-2'-deoxyribonucleoside-DNA + ATP = a 5'-end 5'-phospho-2'-deoxyribonucleoside-DNA + ADP + H(+). It carries out the reaction a 5'-end dephospho-ribonucleoside-RNA + ATP = a 5'-end 5'-phospho-ribonucleoside-RNA + ADP + H(+). Polynucleotide kinase that can phosphorylate the 5'-hydroxyl groups of double-stranded RNA (dsRNA), single-stranded RNA (ssRNA), double stranded DNA (dsDNA) and double-stranded DNA:RNA hybrids. dsRNA is phosphorylated more efficiently than dsDNA, and the RNA component of a DNA:RNA hybrid is phosphorylated more efficiently than the DNA component. Plays a role in both tRNA splicing and mRNA 3'-end formation. Component of the tRNA splicing endonuclease complex: phosphorylates the 5'-terminus of the tRNA 3'-exon during tRNA splicing; this phosphorylation event is a prerequisite for the subsequent ligation of the two exon halves and the production of a mature tRNA. Its role in tRNA splicing and maturation is required for cerebellar development. Component of the pre-mRNA cleavage complex II (CF-II), which seems to be required for mRNA 3'-end formation. Also phosphorylates the 5'-terminus of exogenously introduced short interfering RNAs (siRNAs), which is a necessary prerequisite for their incorporation into the RNA-induced silencing complex (RISC). However, endogenous siRNAs and microRNAs (miRNAs) that are produced by the cleavage of dsRNA precursors by dicer1 already contain a 5'-phosphate group, so this protein may be dispensible for normal RNA-mediated gene silencing. This Gallus gallus (Chicken) protein is Polyribonucleotide 5'-hydroxyl-kinase Clp1.